The chain runs to 306 residues: Ribosomal protein L11 methyltransferase (306 aa).

Residues Thr152, Gly179, Asp201, and Asn243 each contribute to the S-adenosyl-L-methionine site.

Belongs to the methyltransferase superfamily. PrmA family.

The protein localises to the cytoplasm. It catalyses the reaction L-lysyl-[protein] + 3 S-adenosyl-L-methionine = N(6),N(6),N(6)-trimethyl-L-lysyl-[protein] + 3 S-adenosyl-L-homocysteine + 3 H(+). In terms of biological role, methylates ribosomal protein L11. In Geobacter sp. (strain M21), this protein is Ribosomal protein L11 methyltransferase.